The primary structure comprises 418 residues: Serine--tRNA ligase (418 aa).

228–230 lines the L-serine pocket; it reads TSE. Residues 258 to 260 and Val274 contribute to the ATP site; that span reads RKE. Residue Glu281 coordinates L-serine. ATP is bound at residue 345–348; the sequence is EVVS. Thr381 contributes to the L-serine binding site.

The protein belongs to the class-II aminoacyl-tRNA synthetase family. Type-1 seryl-tRNA synthetase subfamily. As to quaternary structure, homodimer. The tRNA molecule binds across the dimer.

The protein localises to the cytoplasm. It carries out the reaction tRNA(Ser) + L-serine + ATP = L-seryl-tRNA(Ser) + AMP + diphosphate + H(+). The enzyme catalyses tRNA(Sec) + L-serine + ATP = L-seryl-tRNA(Sec) + AMP + diphosphate + H(+). The protein operates within aminoacyl-tRNA biosynthesis; selenocysteinyl-tRNA(Sec) biosynthesis; L-seryl-tRNA(Sec) from L-serine and tRNA(Sec): step 1/1. In terms of biological role, catalyzes the attachment of serine to tRNA(Ser). Is also able to aminoacylate tRNA(Sec) with serine, to form the misacylated tRNA L-seryl-tRNA(Sec), which will be further converted into selenocysteinyl-tRNA(Sec). This Cenarchaeum symbiosum (strain A) protein is Serine--tRNA ligase.